The chain runs to 320 residues: Heptaprenyl diphosphate synthase component 2 (320 aa).

The isopentenyl diphosphate site is built by Lys45, Arg48, and His77. Mg(2+) contacts are provided by Asp84 and Asp88. All-trans-hexaprenyl diphosphate is bound at residue Arg93. An isopentenyl diphosphate-binding site is contributed by Arg94. Residues Lys170, Thr171, and Gln208 each coordinate all-trans-hexaprenyl diphosphate.

This sequence belongs to the FPP/GGPP synthase family. In terms of assembly, heterodimer of component I and II. Mg(2+) is required as a cofactor.

It catalyses the reaction 4 isopentenyl diphosphate + (2E,6E)-farnesyl diphosphate = all-trans-heptaprenyl diphosphate + 4 diphosphate. Supplies heptaprenyl diphosphate, the precursor for the side chain of the isoprenoid quinone menaquinone-7 (MQ-7). This is Heptaprenyl diphosphate synthase component 2 (hepT) from Geobacillus stearothermophilus (Bacillus stearothermophilus).